Reading from the N-terminus, the 613-residue chain is 8-methylmenaquinol:fumarate reductase flavoprotein subunit (613 aa).

The tat-type signal signal peptide spans 1-33; it reads MSEQFTRREFLQSACITMGALAVSTSGVDRAFA. FAD contacts are provided by residues 53–58, 78–93, and aspartate 255; these read GSGAAG and SKVM…AEGG. Positions 276 and 288 each coordinate substrate. Arginine 319 acts as the Proton acceptor in catalysis. A substrate-binding site is contributed by histidine 387. Residue glutamate 413 coordinates FAD. Residue arginine 424 participates in substrate binding. 429-430 is an FAD binding site; it reads SL.

This sequence belongs to the FAD-dependent oxidoreductase 2 family. FRD/SDH subfamily. As to quaternary structure, the MFR complex is composed of three subunits: a flavoprotein (SdhA), an iron-sulfur protein (SdhB), and one hydrophobic anchor protein (SdhE). It depends on FAD as a cofactor. Predicted to be exported by the Tat system. The position of the signal peptide cleavage has not been experimentally proven.

The protein localises to the periplasm. The protein resides in the cell membrane. It carries out the reaction 8-methylmenaquinone-6 + succinate = 8-methylmenaquinol-6 + fumarate. In terms of biological role, flavoprotein subunit of 8-methylmenaquinol:fumarate reductase (MFR), that catalyzes the reduction of fumarate using 8-methylmenaquinol-6 as electron donor. The complex shows no succinate oxidation activity. Is involved in anaerobic metabolism. SdhA contains the dicarboxylate reduction site. The polypeptide is 8-methylmenaquinol:fumarate reductase flavoprotein subunit (Wolinella succinogenes (strain ATCC 29543 / DSM 1740 / CCUG 13145 / JCM 31913 / LMG 7466 / NCTC 11488 / FDC 602W) (Vibrio succinogenes)).